We begin with the raw amino-acid sequence, 201 residues long: MSLSTLKNRRERGLLDGQFLIAMPGMEDRNFNRTVIYICAHSDAGAMGFVINRAQNLTFTDVLLHLDMIKDDDAIVLPPVARDFPIQTGGPVESGRGFVLHSDDYLSDGSIPVSDDISLTATLDIVRAISRGSGPKRATMLLGYAGWGAGQLEAEIGSNGWLNCPANEELIFDRSLDDKYERALALMGINAAMLSPHAGHA.

Belongs to the UPF0301 (AlgH) family.

In Rhizobium rhizogenes (strain K84 / ATCC BAA-868) (Agrobacterium radiobacter), this protein is UPF0301 protein Arad_1256.